We begin with the raw amino-acid sequence, 384 residues long: Urea transporter 1 (384 aa).

The next 5 membrane-spanning stretches (helical) occupy residues 61–81, 85–105, 111–131, 138–158, and 168–188; these read ISQV…AGLL, PWWA…ALLL, AIAA…MAVF, FWWL…FSSA, and LPVF…ATGH. The N-linked (GlcNAc...) asparagine glycan is linked to Asn206. Transmembrane regions (helical) follow at residues 250–270, 279–299, 305–325, and 327–347; these read LMCL…LSLA, GLWG…FMAL, LLAL…THLM, and AVHL…FLLL.

It belongs to the urea transporter family. In terms of assembly, homotrimer; each subunit contains a pore through which urea permeates. Identified in a complex with STOM. In terms of tissue distribution, expressed in brain, spleen, kidney, testis and lung, with highest levels in brain.

The protein resides in the cell membrane. Its subcellular location is the basolateral cell membrane. It catalyses the reaction urea(in) = urea(out). Functionally, mediates the transport of urea driven by a concentration gradient across the cell membrane. Mediates the transport of urea across the cell membranes of erythrocytes and the renal inner medullary collecting duct which is critical to the urinary concentrating mechanism. Facilitates water transport in erythrocytes. The polypeptide is Urea transporter 1 (Slc14a1) (Rattus norvegicus (Rat)).